Reading from the N-terminus, the 694-residue chain is Protein NPGR1 (694 aa).

Positions 12–40 are disordered; it reads FEDQPGSPESLATRDFSASGLSSRNGGGD. TPR repeat units lie at residues 32 to 65, 66 to 101, 135 to 168, 188 to 221, 307 to 340, 551 to 584, 585 to 618, 620 to 654, and 655 to 688; these read LSSRNGGGDWDSKLEDIQVDEAESTLKEALSLNY, EEARALLGRLEYQRGNFDAALQVFKGIDIKVLTPRI, LEAILLKARSLEELGSYKEAAEECKIILDVVENA, QKALELLPLLWKKAGNHHETIASYRRALSRPWNL, GERWYLLSLCYSAAGIDKAAINLLKMALGPSESR, TEAWQDLASVYGKLGSWSDAETCLEKARSMCYYS, PRGWNETGLCLEAKSLHEEALISFFLSLSIEPDH, PSIVSIAEVMMKSGDESLPTAKSFLMNALRLDPRN, and HDAWMKLGHVAKKQGLSQQAAEFYQAAYELELSA.

Interacts with calmodulin in a calcium-dependent manner. Expressed in pollen, flowers, fruits and leaves.

This is Protein NPGR1 from Arabidopsis thaliana (Mouse-ear cress).